A 184-amino-acid chain; its full sequence is Cytidylate kinase (184 aa).

8–16 (GQPGSGKTT) contributes to the ATP binding site.

This sequence belongs to the cytidylate kinase family. Type 2 subfamily.

Its subcellular location is the cytoplasm. The catalysed reaction is CMP + ATP = CDP + ADP. It catalyses the reaction dCMP + ATP = dCDP + ADP. In Pyrobaculum calidifontis (strain DSM 21063 / JCM 11548 / VA1), this protein is Cytidylate kinase.